Reading from the N-terminus, the 284-residue chain is uncharacterized protein (284 aa).

This is an uncharacterized protein from Acanthamoeba polyphaga (Amoeba).